The chain runs to 237 residues: Ribosomal RNA small subunit methyltransferase G (237 aa).

S-adenosyl-L-methionine is bound by residues glycine 78, phenylalanine 83, 129–130, and arginine 148; that span reads AE. Positions 218-237 are disordered; it reads KKETPNKYPRKAGMPNKRPL.

The protein belongs to the methyltransferase superfamily. RNA methyltransferase RsmG family.

The protein localises to the cytoplasm. In terms of biological role, specifically methylates the N7 position of a guanine in 16S rRNA. The polypeptide is Ribosomal RNA small subunit methyltransferase G (Streptococcus pneumoniae (strain JJA)).